The primary structure comprises 466 residues: Vimentin (466 aa).

Low complexity-rich tracts occupy residues 1–13 (MSTRSVSSSSYRR) and 20–33 (TSSRPSSNRSYVTT). The tract at residues 1 to 33 (MSTRSVSSSSYRRMFGGSGTSSRPSSNRSYVTT) is disordered. Ser2 is modified (N-acetylserine). The segment at 2–95 (STRSVSSSSY…FSLADAINTE (94 aa)) is head. At Ser5 the chain carries Phosphoserine. A Phosphoserine; by PKA and PKC; alternate modification is found at Ser7. Ser7 is a glycosylation site (O-linked (GlcNAc) serine; alternate). Ser8 is modified (phosphoserine). Residues Ser9 and Ser10 each carry the phosphoserine; by PKC modification. A Phosphothreonine modification is found at Thr20. Ser21 is modified (phosphoserine; by PKC). Phosphoserine; by PKA and PKC is present on Ser25. Position 26 is a phosphoserine; by PKC (Ser26). O-linked (GlcNAc) threonine glycosylation occurs at Thr33. O-linked (GlcNAc) serine; alternate glycosylation occurs at Ser34. The residue at position 34 (Ser34) is a Phosphoserine; by PKC; alternate. Ser39 is subject to Phosphoserine; by CaMK2, PKA, PKC and ROCK2. Ser42 carries the phosphoserine; by PKC modification. Ser47 bears the Phosphoserine; by PKA mark. Phosphoserine is present on Ser49. Ser51 bears the Phosphoserine; by PKA and PKC mark. Residue Tyr53 is modified to Phosphotyrosine. A phosphoserine mark is found at Ser55 and Ser56. Residue Tyr61 is modified to Phosphotyrosine. The residue at position 66 (Ser66) is a Phosphoserine; by PKA and PKC. The residue at position 72 (Ser72) is a Phosphoserine; by AURKB and ROCK2. Ser73 is subject to Phosphoserine. Position 83 is a phosphoserine; by CaMK2 (Ser83). At Ser87 the chain carries Phosphoserine. The segment at 96–131 (FKNTRTNEKVELQELNDRFANYIDKVRFLEQQNKIL) is coil 1A. Residues 96-131 (FKNTRTNEKVELQELNDRFANYIDKVRFLEQQNKIL) adopt a coiled-coil conformation. The IF rod domain occupies 103-411 (EKVELQELND…KLLEGEESRI (309 aa)). Residue Lys104 forms a Glycyl lysine isopeptide (Lys-Gly) (interchain with G-Cter in SUMO2) linkage. Tyr117 carries the phosphotyrosine modification. Lys120, Lys129, and Lys139 each carry N6-acetyllysine; alternate. N6-succinyllysine; alternate occurs at positions 120 and 129. Residues Lys120, Lys129, and Lys139 each participate in a glycyl lysine isopeptide (Lys-Gly) (interchain with G-Cter in SUMO2); alternate cross-link. A linker 1 region spans residues 132–153 (LAELEQLKGQGKSRLGDLYEEE). Phosphoserine is present on Ser144. The stretch at 154 to 245 (MRELRRQVDQ…KLHDEEIQEL (92 aa)) forms a coiled coil. Positions 154 to 245 (MRELRRQVDQ…KLHDEEIQEL (92 aa)) are coil 1B. Lys168 carries the post-translational modification N6-acetyllysine. N6-acetyllysine; alternate is present on Lys188. At Lys188 the chain carries N6-succinyllysine; alternate. Ser214 bears the Phosphoserine mark. Residue Lys223 is modified to N6-acetyllysine; alternate. A Glycyl lysine isopeptide (Lys-Gly) (interchain with G-Cter in SUMO2); alternate cross-link involves residue Lys223. Residue Ser226 is modified to Phosphoserine. Lys235 carries the post-translational modification N6-acetyllysine. Positions 246 to 268 (QAQIQEQHVQIDVDVSKPDLTAA) are linker 12. Lys262 participates in a covalent cross-link: Glycyl lysine isopeptide (Lys-Gly) (interchain with G-Cter in SUMO2). The tract at residues 269 to 407 (LRDVRQQYES…ATYRKLLEGE (139 aa)) is coil 2. The residue at position 294 (Lys294) is an N6-acetyllysine; alternate. At Lys294 the chain carries N6-succinyllysine; alternate. Lys294 participates in a covalent cross-link: Glycyl lysine isopeptide (Lys-Gly) (interchain with G-Cter in SUMO2); alternate. The residue at position 299 (Ser299) is a Phosphoserine. A coiled-coil region spans residues 303-407 (NRNNDALRQA…ATYRKLLEGE (105 aa)). A Glycyl lysine isopeptide (Lys-Gly) (interchain with G-Cter in SUMO2) cross-link involves residue Lys313. Position 325 is a phosphoserine (Ser325). The short motif at 326 to 329 (LTCE) is the [IL]-x-C-x-x-[DE] motif element. Lys373 is subject to N6-acetyllysine; alternate. Lys373 is covalently cross-linked (Glycyl lysine isopeptide (Lys-Gly) (interchain with G-Cter in SUMO2); alternate). The tail stretch occupies residues 408-466 (ESRISLPLPTFSSLNLRETNLESLPLVDTHSKRTLLIKTVETRDGQVINETSQHHDDLE). A phosphoserine mark is found at Ser409, Ser412, Ser419, and Ser420. Position 426 is a phosphothreonine (Thr426). Ser430 is subject to Phosphoserine. At Thr436 the chain carries Phosphothreonine. A Phosphoserine modification is found at Ser438. Lys439 participates in a covalent cross-link: Glycyl lysine isopeptide (Lys-Gly) (interchain with G-Cter in SUMO2). N6-acetyllysine; alternate is present on Lys445. An N6-succinyllysine; alternate modification is found at Lys445. Residue Lys445 forms a Glycyl lysine isopeptide (Lys-Gly) (interchain with G-Cter in SUMO2); alternate linkage. Lys445 participates in a covalent cross-link: Glycyl lysine isopeptide (Lys-Gly) (interchain with G-Cter in SUMO1); alternate. Thr446 and Thr458 each carry phosphothreonine. The residue at position 459 (Ser459) is a Phosphoserine.

This sequence belongs to the intermediate filament family. As to quaternary structure, homomer assembled from elementary dimers. Identified in complexes that contain VIM, EZR, AHNAK, BFSP1, BFSP2, ANK2, PLEC, PRX and spectrin. Interacts with BCAS3. Interacts with LGSN. Interacts with SYNM. Interacts (via rod region) with PLEC (via CH 1 domain). Interacts with PLEC isoform 1C. Interacts with STK33. Interacts with LARP6. Interacts with RAB8B. Interacts with TOR1A; the interaction associates TOR1A with the cytoskeleton. Interacts with TOR1AIP1. Interacts with DIAPH1. Interacts with EPPK1; interaction is dependent of higher-order structure of intermediate filament. Interacts with the non-receptor tyrosine kinase SRMS; the interaction leads to phosphorylation of VIM. Interacts with NOD2. Interacts (via head region) with CORO1C. Interacts with HDGF. Interacts with PRKCE (via phorbol-ester/DAG-type 2 domain). Interacts with BFSP2. Interacts with PPL. Interacts with PKP1 and PKP2. Interacts with SCRIB (via PDZ domains); the interaction protects SCRIB from proteasomal degradation and facilitates SCRIB localization to intermediate filaments, the interaction is reduced by cell contact inhibition. Post-translationally, phosphorylation by PKN1 inhibits the formation of filaments. Filament disassembly during mitosis is promoted by phosphorylation at Ser-55 as well as by nestin. One of the most prominent phosphoproteins in various cells of mesenchymal origin. Phosphorylation is enhanced during cell division, at which time vimentin filaments are significantly reorganized. Phosphorylated at Ser-56 by CDK5 during neutrophil secretion in the cytoplasm. Phosphorylated by STK33. Phosphorylated on tyrosine residues by SRMS. In terms of processing, S-nitrosylation is induced by interferon-gamma and oxidatively-modified low-densitity lipoprotein (LDL(ox)) possibly implicating the iNOS-S100A8/9 transnitrosylase complex. Detected in eye lens fiber cells (at protein level). Expressed in retinal lens epithelial cells (at protein level). Expressed in Langerhans cells in the epidermis (at protein level).

It is found in the cytoplasm. It localises to the cytoskeleton. The protein localises to the nucleus matrix. The protein resides in the cell membrane. Functionally, vimentins are class-III intermediate filaments found in various non-epithelial cells, especially mesenchymal cells. Vimentin is attached to the nucleus, endoplasmic reticulum, and mitochondria, either laterally or terminally. Plays a role in cell directional movement, orientation, cell sheet organization and Golgi complex polarization at the cell migration front. Protects SCRIB from proteasomal degradation and facilitates its localization to intermediate filaments in a cell contact-mediated manner. In terms of biological role, involved with LARP6 in the stabilization of type I collagen mRNAs for CO1A1 and CO1A2. In Mus musculus (Mouse), this protein is Vimentin.